A 483-amino-acid chain; its full sequence is Isocitrate dehydrogenase [NADP] (483 aa).

Thr-74 provides a ligand contact to NADP(+). Positions 83, 85, 89, 99, and 121 each coordinate D-threo-isocitrate. A Mg(2+)-binding site is contributed by Asp-232. NADP(+) is bound by residues 264 to 270 (HGSAPDI) and Asn-277.

Belongs to the isocitrate and isopropylmalate dehydrogenases family. As to quaternary structure, homodimer. It depends on Mg(2+) as a cofactor. The cofactor is Mn(2+).

The catalysed reaction is D-threo-isocitrate + NADP(+) = 2-oxoglutarate + CO2 + NADPH. Its function is as follows. Catalyzes the oxidative decarboxylation of isocitrate to 2-oxoglutarate and carbon dioxide with the concomitant reduction of NADP(+). The sequence is that of Isocitrate dehydrogenase [NADP] (icd) from Rickettsia prowazekii (strain Madrid E).